The chain runs to 102 residues: Co-chaperonin GroES (102 aa).

This sequence belongs to the GroES chaperonin family. In terms of assembly, heptamer of 7 subunits arranged in a ring. Interacts with the chaperonin GroEL.

It is found in the cytoplasm. Its function is as follows. Together with the chaperonin GroEL, plays an essential role in assisting protein folding. The GroEL-GroES system forms a nano-cage that allows encapsulation of the non-native substrate proteins and provides a physical environment optimized to promote and accelerate protein folding. GroES binds to the apical surface of the GroEL ring, thereby capping the opening of the GroEL channel. The polypeptide is Co-chaperonin GroES (Streptomyces griseus subsp. griseus (strain JCM 4626 / CBS 651.72 / NBRC 13350 / KCC S-0626 / ISP 5235)).